The sequence spans 345 residues: uncharacterized protein (345 aa).

2 disordered regions span residues 1–58 and 139–165; these read MPSP…WRGD and KTNS…NSPK. Residues 27 to 39 show a composition bias toward basic and acidic residues; sequence IKGEGSDDGKEKS. Residues 154-165 show a composition bias toward polar residues; it reads KQGSAESKNSPK.

The protein belongs to the MG307/MG309/MG338 family.

This is an uncharacterized protein from Mycoplasma pneumoniae (strain ATCC 29342 / M129 / Subtype 1) (Mycoplasmoides pneumoniae).